A 987-amino-acid polypeptide reads, in one-letter code: Pentatricopeptide repeat-containing protein At1g06710, mitochondrial (987 aa).

The N-terminal 42 residues, 1 to 42 (MNKTVVRCLLSRSHHPLIHFSTNLSLLHRVFTCSRYLTARFM), are a transit peptide targeting the mitochondrion. 22 PPR repeats span residues 164–198 (TAPV…DKEV), 199–233 (FGEF…RFRP), 234–268 (SRST…NLRM), 269–299 (DGFT…ENFV), 301–335 (DTVF…SCLP), 336–370 (NVVT…GCYP), 371–405 (SPKI…GHMP), 406–446 (GYVV…GVVL), 447–481 (NKIN…GFIP), 482–516 (DTST…GLVA), 517–551 (DVYT…GCTP), 552–586 (NVVT…GCLP), 587–621 (NIVT…KDVP), 638–672 (NVVT…GCEP), 673–707 (NQIV…GFPA), 708–742 (TLYT…SCAP), 743–777 (NVVI…GCQP), 778–812 (NVVT…GVAP), 813–847 (NYVT…HWPT), 881–915 (FLSV…SATL), 918–952 (YSST…GVIP), and 953–987 (EMQS…VCPL).

It belongs to the PPR family. P subfamily.

The protein resides in the mitochondrion. The protein is Pentatricopeptide repeat-containing protein At1g06710, mitochondrial of Arabidopsis thaliana (Mouse-ear cress).